The following is a 250-amino-acid chain: Probable transcriptional regulatory protein Lferr_0060 (250 aa).

The protein belongs to the TACO1 family.

The protein resides in the cytoplasm. This is Probable transcriptional regulatory protein Lferr_0060 from Acidithiobacillus ferrooxidans (strain ATCC 53993 / BNL-5-31) (Leptospirillum ferrooxidans (ATCC 53993)).